A 136-amino-acid chain; its full sequence is Small ribosomal subunit protein uS11c (136 aa).

Belongs to the universal ribosomal protein uS11 family. As to quaternary structure, part of the 30S ribosomal subunit.

The protein localises to the plastid. The sequence is that of Small ribosomal subunit protein uS11c from Epifagus virginiana (Beechdrops).